Here is a 411-residue protein sequence, read N- to C-terminus: MEEKEGIKDSSLLEKSNVPESINEDISKTTDVDLNSDGKKDNDTSAKDGTPKVEEKVNKSSGIDEDEVVTPAEDAKEEEEEHPPLPARRKSEEEPSKENPILQELKDAFPNLEEKYIKAVIIASQGVLSPAFNALLFLSDPESGKDIELPTQPVRKNPEAPARRRQTQLEQDELLARQLDEQFNSSHSRRRNRDRATRSMHEQRRRRHNPNEREQHHEDSEEEDSWSQFVEKDLPELTDRAGRSLQDTANKVSNWISDAYRRNFASGNEQNDNQHGHQDQQEWEPEIVDLSQGGKNSRPQQPERRRFNSFGVQVGDDSLESHGITLHNEDGFEDDEDVPPQLPTRTKSGESTGKVVAETTYIDTPDTETKKKWQPLPPEPLDTTPTKVNAVSRNKKNPDEDEFLINSDDEM.

Basic and acidic residues predominate over residues 1–12 (MEEKEGIKDSSL). Disordered stretches follow at residues 1-102 (MEEK…NPIL) and 142-411 (ESGK…DDEM). A Glycyl lysine isopeptide (Lys-Gly) (interchain with G-Cter in ubiquitin) cross-link involves residue Lys-15. Residues Ser-21 and Ser-36 each carry the phosphoserine modification. Basic and acidic residues predominate over residues 25–58 (DISKTTDVDLNSDGKKDNDTSAKDGTPKVEEKVN). Residue Lys-59 forms a Glycyl lysine isopeptide (Lys-Gly) (interchain with G-Cter in ubiquitin) linkage. Thr-70 carries the phosphothreonine modification. A Glycyl lysine isopeptide (Lys-Gly) (interchain with G-Cter in ubiquitin) cross-link involves residue Lys-76. Ser-91 is subject to Phosphoserine. The CUE domain occupies 97 to 140 (KENPILQELKDAFPNLEEKYIKAVIIASQGVLSPAFNALLFLSD). Residue Lys-156 forms a Glycyl lysine isopeptide (Lys-Gly) (interchain with G-Cter in ubiquitin) linkage. Thr-167 is subject to Phosphothreonine. A compositionally biased stretch (basic and acidic residues) spans 209–219 (NPNEREQHHED). The residue at position 220 (Ser-220) is a Phosphoserine. A compositionally biased stretch (basic and acidic residues) spans 230 to 242 (VEKDLPELTDRAG). Over residues 245 to 256 (LQDTANKVSNWI) the composition is skewed to polar residues. Phosphoserine is present on residues Ser-309 and Ser-318. At Thr-346 the chain carries Phosphothreonine. Ser-348 bears the Phosphoserine mark. Thr-352 bears the Phosphothreonine mark. Lys-354 is covalently cross-linked (Glycyl lysine isopeptide (Lys-Gly) (interchain with G-Cter in ubiquitin)). A phosphothreonine mark is found at Thr-364 and Thr-367. Residues 373–376 (WQPL) carry the AIM motif. Lys-396 participates in a covalent cross-link: Glycyl lysine isopeptide (Lys-Gly) (interchain with G-Cter in ubiquitin). The segment covering 399-411 (DEDEFLINSDDEM) has biased composition (acidic residues). At Ser-407 the chain carries Phosphoserine.

In terms of assembly, interacts with ATG8 (via AIM motif), CLB2, and ubiquitin (via CUE domain).

Its subcellular location is the cytoplasm. In terms of biological role, connects the ubiquitin pathway to autophagy by functioning as a ubiquitin-ATG8 adapter and thus mediating autophagic clearance of ubiquitin conjugates under starvation conditions. The CUE5-dependent selective autophagy pathway plays an important role in clearance of cytotoxic protein aggregates. Not required for cytoplasmic to vacuole pathway (cvt), mitophagy, pexophagy, or ribophagy. This is Ubiquitin-binding protein CUE5 from Saccharomyces cerevisiae (strain ATCC 204508 / S288c) (Baker's yeast).